The primary structure comprises 894 residues: Histone-lysine N-methyltransferase EZ2 (894 aa).

Positions 1 to 11 (MASSSKASDSS) are enriched in low complexity. Disordered stretches follow at residues 1 to 25 (MASS…GKDA), 395 to 447 (SSVS…KRQK), and 491 to 513 (KKTS…VGRQ). A compositionally biased stretch (polar residues) spans 395 to 421 (SSVSAEESTTTPSADISETENVSSDLP). Positions 425 to 435 (LRKHKISKHGP) are enriched in basic residues. Over residues 503-513 (PATTMENVGRQ) the composition is skewed to polar residues. The SANT domain occupies 527-577 (TLSCWSALERDLYLKGIEIFGKNSCLIARNLLSGLKTCIEVANYMYNNGAA). One can recognise a CXC domain in the interval 627–731 (AGHPTVRKRT…SLGEPLARGD (105 aa)). Residues 746 to 861 (QRILLGRSDV…ASEELFYDYR (116 aa)) form the SET domain. The tract at residues 867–894 (APAWARRPEGSKKDEASVSHRRAHKVAR) is disordered. Over residues 872–884 (RRPEGSKKDEASV) the composition is skewed to basic and acidic residues. Over residues 885-894 (SHRRAHKVAR) the composition is skewed to basic residues.

It belongs to the class V-like SAM-binding methyltransferase superfamily. Histone-lysine methyltransferase family. EZ subfamily.

The protein localises to the nucleus. The enzyme catalyses L-lysyl(27)-[histone H3] + 3 S-adenosyl-L-methionine = N(6),N(6),N(6)-trimethyl-L-lysyl(27)-[histone H3] + 3 S-adenosyl-L-homocysteine + 3 H(+). Its function is as follows. Polycomb group (PcG) protein. Catalytic subunit of some PcG multiprotein complex, which methylates 'Lys-27' of histone H3, leading to transcriptional repression of the affected target genes. PcG proteins are not required to initiate repression, but to maintain it during later stages of development. The chain is Histone-lysine N-methyltransferase EZ2 (EZ2) from Zea mays (Maize).